A 60-amino-acid chain; its full sequence is Large ribosomal subunit protein bL32 (60 aa).

A disordered region spans residues 1 to 21 (MAVPARHTSKAKKNKRRTHYK). The segment covering 7-20 (HTSKAKKNKRRTHY) has biased composition (basic residues).

This sequence belongs to the bacterial ribosomal protein bL32 family.

This is Large ribosomal subunit protein bL32 from Streptococcus equi subsp. zooepidemicus (strain H70).